The chain runs to 652 residues: Starch synthase 1, chloroplastic/amyloplastic (652 aa).

Residues 1–49 (MASLQISGSVKFEPFVGFNRIRHFRPIASLGFPRFRRRFSIGRSLLLRR) constitute a chloroplast transit peptide. Lysine 156 provides a ligand contact to ADP-alpha-D-glucose.

This sequence belongs to the glycosyltransferase 1 family. Bacterial/plant glycogen synthase subfamily. In terms of tissue distribution, expressed in roots, leaves, stems, buds and flowers.

The protein resides in the plastid. It localises to the chloroplast. The protein localises to the amyloplast. It carries out the reaction [(1-&gt;4)-alpha-D-glucosyl](n) + ADP-alpha-D-glucose = [(1-&gt;4)-alpha-D-glucosyl](n+1) + ADP + H(+). It participates in glycan biosynthesis; starch biosynthesis. Functionally, involved in the synthesis of short glycan chains within amylopectin in leaves. Is required to generate chains up to about a degree of polymerization of 10 (DP10). In Arabidopsis thaliana (Mouse-ear cress), this protein is Starch synthase 1, chloroplastic/amyloplastic (SS1).